We begin with the raw amino-acid sequence, 523 residues long: MSFHKEDGVNSLCQKALHIVTELCFAGQVEWEKCSGIFPRDRGSQGGSSTDISVSLLAVVVSFCGLALLVVSLFVFWKLCWPCWKSKPVTSNITTLPQSISSAPTEVFETEEKKEIKENEKPAVKAIEPAIKISHTSPDIPAEVQTALKEHLIKHARVQRQITEPTSSTRHSSFRRHLPRQMQVSSVDFSMGTEPVLQRGETTTSIGRIKPELYKQKSVDSEGNQNEDVKICGKLNFTLQYDYENELLVVKIIKALDLPAKDFTGTSDPYVKMYLLPDRKKKFQTRVHRKTLNPLFDETFQFPVAYDQLSNRKLHFSVYDFDRFSRHDMIGEVILDNLFEVSDLSREATVWKDIHCATTESIDLGEIMFSLCYLPTAGRMTLTVIKCRNLKAMDITGSSDPYVKVSLMCEGRRLKKRKTTTKKNTLNPVYNEAIIFDIPPENVDQVSLSIAVMDYDRVGHNEVIGVCRTGLDAEGLGRDHWNEMLAYHRKPITHWHPLLELPGRATSFDSQGSCPSPKPPSTP.

Over 1 to 55 (MSFHKEDGVNSLCQKALHIVTELCFAGQVEWEKCSGIFPRDRGSQGGSSTDISVS) the chain is Vesicular. The interval 13 to 35 (CQKALHIVTELCFAGQVEWEKCS) is cysteine motif. The chain crosses the membrane as a helical span at residues 56 to 76 (LLAVVVSFCGLALLVVSLFVF). Residues 77–523 (WKLCWPCWKS…CPSPKPPSTP (447 aa)) lie on the Cytoplasmic side of the membrane. A Phosphothreonine modification is found at Thr-136. C2 domains are found at residues 231–352 (ICGK…TVWK) and 363–496 (DLGE…THWH). Ca(2+) is bound by residues Asp-262, Asp-268, Asp-320, Phe-321, Asp-322, Ser-325, Asp-328, Asp-394, Asp-400, Asp-454, and Asp-456.

It belongs to the synaptotagmin family. As to quaternary structure, homodimer; disulfide-linked via the cysteine motif. Can also form heterodimers with SYT3, SYT6, SYT7 and SYT9. Requires Ca(2+) as cofactor. In terms of tissue distribution, expressed only in pancreas, lung and kidney.

The protein resides in the cytoplasmic vesicle. It is found in the secretory vesicle membrane. Its function is as follows. Ca(2+) sensor specifically required for the Ca(2+)-dependent exocytosis of secretory vesicles containing IGF1 in neurons of the olfactory bulb. Exocytosis of IGF1 is required for sensory perception of smell. Not involved in Ca(2+)-dependent synaptic vesicle exocytosis. Acts through Ca(2+) and phospholipid binding to the C2 domain: Ca(2+) induces binding of the C2-domains to phospholipid membranes and to assembled SNARE-complexes; both actions contribute to triggering exocytosis. In Homo sapiens (Human), this protein is Synaptotagmin-10 (SYT10).